Consider the following 251-residue polypeptide: Triosephosphate isomerase (251 aa).

9–11 provides a ligand contact to substrate; that stretch reads NWK. The active-site Electrophile is His95. Glu167 serves as the catalytic Proton acceptor. Substrate contacts are provided by residues Gly173, Ser213, and 234–235; that span reads GG.

Belongs to the triosephosphate isomerase family. In terms of assembly, homodimer.

It localises to the cytoplasm. It carries out the reaction D-glyceraldehyde 3-phosphate = dihydroxyacetone phosphate. It functions in the pathway carbohydrate biosynthesis; gluconeogenesis. The protein operates within carbohydrate degradation; glycolysis; D-glyceraldehyde 3-phosphate from glycerone phosphate: step 1/1. Its function is as follows. Involved in the gluconeogenesis. Catalyzes stereospecifically the conversion of dihydroxyacetone phosphate (DHAP) to D-glyceraldehyde-3-phosphate (G3P). The sequence is that of Triosephosphate isomerase from Trichlorobacter lovleyi (strain ATCC BAA-1151 / DSM 17278 / SZ) (Geobacter lovleyi).